The primary structure comprises 281 residues: Ribosomal RNA small subunit methyltransferase A (281 aa).

The S-adenosyl-L-methionine site is built by Asn-25, Leu-27, Gly-52, Glu-73, Asp-99, and Asn-118.

Belongs to the class I-like SAM-binding methyltransferase superfamily. rRNA adenine N(6)-methyltransferase family. RsmA subfamily.

It localises to the cytoplasm. The enzyme catalyses adenosine(1518)/adenosine(1519) in 16S rRNA + 4 S-adenosyl-L-methionine = N(6)-dimethyladenosine(1518)/N(6)-dimethyladenosine(1519) in 16S rRNA + 4 S-adenosyl-L-homocysteine + 4 H(+). Specifically dimethylates two adjacent adenosines (A1518 and A1519) in the loop of a conserved hairpin near the 3'-end of 16S rRNA in the 30S particle. May play a critical role in biogenesis of 30S subunits. This is Ribosomal RNA small subunit methyltransferase A from Erythrobacter litoralis (strain HTCC2594).